The primary structure comprises 121 residues: Inner membrane protein YhaH (121 aa).

Residues 1–23 (MDWYLKVLKNYVGFRGRARRKEY) lie on the Periplasmic side of the membrane. The helical transmembrane segment at 24–44 (WMFILVNIIFTFVLGLLDKML) threads the bilayer. Residues 45 to 49 (GWQRA) are Cytoplasmic-facing. A helical membrane pass occupies residues 50 to 70 (GGEGILTTIYGILVFLPWWAV). Residues 71–80 (QFRRLHDTDR) lie on the Periplasmic side of the membrane. Residues 81–101 (SAWWALLFLIPFIGWLIIIVF) form a helical membrane-spanning segment. Over 102–121 (NCQAGTPGENRFGPDPKLEP) the chain is Cytoplasmic.

This sequence to E.coli YhaI.

The protein localises to the cell inner membrane. This chain is Inner membrane protein YhaH (yhaH), found in Escherichia coli O157:H7.